The primary structure comprises 37 residues: Large ribosomal subunit protein bL36 (37 aa).

This sequence belongs to the bacterial ribosomal protein bL36 family.

In Polaromonas naphthalenivorans (strain CJ2), this protein is Large ribosomal subunit protein bL36.